We begin with the raw amino-acid sequence, 171 residues long: MGGVSDERLDLVNERDEVVGQILRTDPALRWERVRVVNAFLRNSQGQLWIPRRSPSKSLFPNALDVSVGGAVQSGETYEEAFRREAREELNVEIDALSWRPLASFSPFQTTLSSFMCVYELRSDATPIFNPNDISGGEWLTPEHLLARIAAGEAAKGDLAELVRRCYREEE.

Residues 32-162 enclose the Nudix hydrolase domain; that stretch reads ERVRVVNAFL…EAAKGDLAEL (131 aa). Positions 69–91 match the Nudix box motif; it reads GGAVQSGETYEEAFRREAREELN. The Mg(2+) site is built by E85 and E89.

The protein belongs to the Nudix hydrolase family. As to quaternary structure, monomer. Requires Mg(2+) as cofactor.

With respect to regulation, inhibited by zinc, calcium or copper ions. In terms of biological role, hydrolase that converts various nucleotide triphosphates (NTPs) to the corresponding nucleotide monophosphates and diphosphate, and nucleotide diphosphates to nucleotide monophosphates and inorganic phosphate. Has a marked preference for cytosine ribonucleoside 5'-diphosphate (CDP) and cytosine ribonucleoside 5'-triphosphate (CTP). Has lower activity towards the deoxyribose nucleotides dCDP and dCTP, and towards dGDP, TDP and UDP. This Deinococcus radiodurans (strain ATCC 13939 / DSM 20539 / JCM 16871 / CCUG 27074 / LMG 4051 / NBRC 15346 / NCIMB 9279 / VKM B-1422 / R1) protein is Nudix hydrolase DR_0079.